The sequence spans 360 residues: Phosphoserine aminotransferase (360 aa).

Position 42 (Arg42) interacts with L-glutamate. 4 residues coordinate pyridoxal 5'-phosphate: Trp102, Thr152, Asp171, and Gln194. Lys195 carries the N6-(pyridoxal phosphate)lysine modification. Pyridoxal 5'-phosphate is bound at residue 237-238 (NT).

The protein belongs to the class-V pyridoxal-phosphate-dependent aminotransferase family. SerC subfamily. As to quaternary structure, homodimer. It depends on pyridoxal 5'-phosphate as a cofactor.

It localises to the cytoplasm. It carries out the reaction O-phospho-L-serine + 2-oxoglutarate = 3-phosphooxypyruvate + L-glutamate. The catalysed reaction is 4-(phosphooxy)-L-threonine + 2-oxoglutarate = (R)-3-hydroxy-2-oxo-4-phosphooxybutanoate + L-glutamate. It functions in the pathway amino-acid biosynthesis; L-serine biosynthesis; L-serine from 3-phospho-D-glycerate: step 2/3. It participates in cofactor biosynthesis; pyridoxine 5'-phosphate biosynthesis; pyridoxine 5'-phosphate from D-erythrose 4-phosphate: step 3/5. Its function is as follows. Catalyzes the reversible conversion of 3-phosphohydroxypyruvate to phosphoserine and of 3-hydroxy-2-oxo-4-phosphonooxybutanoate to phosphohydroxythreonine. The sequence is that of Phosphoserine aminotransferase from Coxiella burnetii (strain CbuK_Q154) (Coxiella burnetii (strain Q154)).